The sequence spans 191 residues: FMN-dependent NADH:quinone oxidoreductase 1 (191 aa).

Residues serine 10 and 16–18 (SVS) each bind FMN.

This sequence belongs to the azoreductase type 1 family. As to quaternary structure, homodimer. FMN serves as cofactor.

It catalyses the reaction 2 a quinone + NADH + H(+) = 2 a 1,4-benzosemiquinone + NAD(+). It carries out the reaction N,N-dimethyl-1,4-phenylenediamine + anthranilate + 2 NAD(+) = 2-(4-dimethylaminophenyl)diazenylbenzoate + 2 NADH + 2 H(+). Functionally, quinone reductase that provides resistance to thiol-specific stress caused by electrophilic quinones. In terms of biological role, also exhibits azoreductase activity. Catalyzes the reductive cleavage of the azo bond in aromatic azo compounds to the corresponding amines. The protein is FMN-dependent NADH:quinone oxidoreductase 1 of Jannaschia sp. (strain CCS1).